The primary structure comprises 210 residues: NAD(P)H-hydrate epimerase (210 aa).

The 200-residue stretch at 11 to 210 folds into the YjeF N-terminal domain; sequence AHNFDDYTIN…TVADIGIYEP (200 aa). Position 60–64 (60–64) interacts with (6S)-NADPHX; sequence NNGGD. K(+) is bound by residues asparagine 61 and aspartate 123. (6S)-NADPHX-binding positions include 127–133 and aspartate 156; that span reads GVGLSRD. Position 159 (threonine 159) interacts with K(+).

Belongs to the NnrE/AIBP family. K(+) is required as a cofactor.

It carries out the reaction (6R)-NADHX = (6S)-NADHX. It catalyses the reaction (6R)-NADPHX = (6S)-NADPHX. Catalyzes the epimerization of the S- and R-forms of NAD(P)HX, a damaged form of NAD(P)H that is a result of enzymatic or heat-dependent hydration. This is a prerequisite for the S-specific NAD(P)H-hydrate dehydratase to allow the repair of both epimers of NAD(P)HX. This chain is NAD(P)H-hydrate epimerase, found in Oenococcus oeni (strain ATCC BAA-331 / PSU-1).